We begin with the raw amino-acid sequence, 364 residues long: GTPase Obg (364 aa).

An Obg domain is found at 1 to 159; that stretch reads MKFLDEAKVY…KTIWLHLKLI (159 aa). One can recognise an OBG-type G domain in the interval 160 to 327; sequence ADAGLVGLPN…VLRALRDIIV (168 aa). Residues 166–173, 191–195, 212–215, 279–282, and 308–310 contribute to the GTP site; these read GLPNAGKS, FTTLH, DIPG, SQID, and SAV. Mg(2+) contacts are provided by S173 and T193. A disordered region spans residues 333–364; sequence EKPAKVPKLRHRDMVVTDEGEDKGGDEGDDQP.

This sequence belongs to the TRAFAC class OBG-HflX-like GTPase superfamily. OBG GTPase family. In terms of assembly, monomer. Requires Mg(2+) as cofactor.

Its subcellular location is the cytoplasm. In terms of biological role, an essential GTPase which binds GTP, GDP and possibly (p)ppGpp with moderate affinity, with high nucleotide exchange rates and a fairly low GTP hydrolysis rate. Plays a role in control of the cell cycle, stress response, ribosome biogenesis and in those bacteria that undergo differentiation, in morphogenesis control. This Rhizobium johnstonii (strain DSM 114642 / LMG 32736 / 3841) (Rhizobium leguminosarum bv. viciae) protein is GTPase Obg.